Here is a 255-residue protein sequence, read N- to C-terminus: 2-dehydro-3,6-dideoxy-6-sulfogluconate aldolase (255 aa).

H38 (proton acceptor) is an active-site residue. A divalent metal cation is bound by residues E141 and D167.

Belongs to the HpcH/HpaI aldolase family. In terms of assembly, homohexamer; trimer of dimers. A divalent metal cation serves as cofactor.

It carries out the reaction 2-dehydro-3,6-dideoxy-6-sulfo-D-gluconate = (2S)-3-sulfolactaldehyde + pyruvate. Catalyzes the retro-aldol cleavage of 2-dehydro-3,6-dideoxy-6-sulfo-D-gluconate to (2S)-3-sulfolactaldehyde and pyruvate. Is involved in a degradation pathway of sulfoquinovose (SQ) that allows P.putida SQ1 to use SQ as the sole carbon and energy source for growth. This Pseudomonas putida (Arthrobacter siderocapsulatus) protein is 2-dehydro-3,6-dideoxy-6-sulfogluconate aldolase.